Consider the following 63-residue polypeptide: Large ribosomal subunit protein uL29 (63 aa).

Belongs to the universal ribosomal protein uL29 family.

The polypeptide is Large ribosomal subunit protein uL29 (Haemophilus influenzae (strain 86-028NP)).